We begin with the raw amino-acid sequence, 787 residues long: Phenylalanine--tRNA ligase beta subunit (787 aa).

Residues 39–149 (APAFAGVVIA…EDAPVGTNIR (111 aa)) form the tRNA-binding domain. One can recognise a B5 domain in the interval 400–475 (PEAKQVGLRL…RVYGYENIPD (76 aa)). Residues Asp453, Asp459, Glu462, and Glu463 each coordinate Mg(2+). One can recognise an FDX-ACB domain in the interval 694–786 (SKFQPVRRDL…AATAAGARLR (93 aa)).

This sequence belongs to the phenylalanyl-tRNA synthetase beta subunit family. Type 1 subfamily. Tetramer of two alpha and two beta subunits. Mg(2+) is required as a cofactor.

Its subcellular location is the cytoplasm. It catalyses the reaction tRNA(Phe) + L-phenylalanine + ATP = L-phenylalanyl-tRNA(Phe) + AMP + diphosphate + H(+). The polypeptide is Phenylalanine--tRNA ligase beta subunit (pheT) (Neisseria meningitidis serogroup B (strain ATCC BAA-335 / MC58)).